The primary structure comprises 319 residues: Acetyl esterase (319 aa).

Residues 91 to 93 carry the Involved in the stabilization of the negatively charged intermediate by the formation of the oxyanion hole motif; it reads HGG. Active-site residues include Ser165, Asp262, and His292.

The protein belongs to the 'GDXG' lipolytic enzyme family. In terms of assembly, homodimer. Interacts with MalT and MelA.

The protein resides in the cytoplasm. Functionally, displays esterase activity towards short chain fatty esters (acyl chain length of up to 8 carbons). Able to hydrolyze triacetylglycerol (triacetin) and tributyrylglycerol (tributyrin), but not trioleylglycerol (triolein) or cholesterol oleate. Negatively regulates MalT activity by antagonizing maltotriose binding. Inhibits MelA galactosidase activity. The sequence is that of Acetyl esterase from Escherichia coli O45:K1 (strain S88 / ExPEC).